A 243-amino-acid polypeptide reads, in one-letter code: DNA repair protein RecO (243 aa).

Belongs to the RecO family.

Involved in DNA repair and RecF pathway recombination. This Caulobacter sp. (strain K31) protein is DNA repair protein RecO.